An 87-amino-acid chain; its full sequence is Serine protease inhibitor Kazal-type 12 (87 aa).

The signal sequence occupies residues 1–22 (MKPAGAFLLLISLACLFLSVDA). The Kazal-like domain occupies 26–87 (GGFQAFCSNY…KLGFKHEGKC (62 aa)). 3 cysteine pairs are disulfide-bonded: Cys32–Cys68, Cys46–Cys65, and Cys54–Cys87.

In terms of tissue distribution, expressed in epydiymis, in the caput.

The protein localises to the secreted. Its function is as follows. Inhibits trypsin. The chain is Serine protease inhibitor Kazal-type 12 (Spink12) from Mus musculus (Mouse).